Here is an 83-residue protein sequence, read N- to C-terminus: Small ribosomal subunit protein uS17 (83 aa).

It belongs to the universal ribosomal protein uS17 family. In terms of assembly, part of the 30S ribosomal subunit.

In terms of biological role, one of the primary rRNA binding proteins, it binds specifically to the 5'-end of 16S ribosomal RNA. This chain is Small ribosomal subunit protein uS17, found in Campylobacter jejuni subsp. jejuni serotype O:6 (strain 81116 / NCTC 11828).